Here is a 430-residue protein sequence, read N- to C-terminus: Enolase (430 aa).

Glutamine 163 serves as a coordination point for (2R)-2-phosphoglycerate. Glutamate 205 functions as the Proton donor in the catalytic mechanism. Mg(2+) is bound by residues aspartate 242, glutamate 287, and aspartate 314. Residues lysine 339, arginine 368, serine 369, and lysine 390 each contribute to the (2R)-2-phosphoglycerate site. Lysine 339 functions as the Proton acceptor in the catalytic mechanism.

The protein belongs to the enolase family. It depends on Mg(2+) as a cofactor.

It is found in the cytoplasm. The protein resides in the secreted. The protein localises to the cell surface. It catalyses the reaction (2R)-2-phosphoglycerate = phosphoenolpyruvate + H2O. The protein operates within carbohydrate degradation; glycolysis; pyruvate from D-glyceraldehyde 3-phosphate: step 4/5. Catalyzes the reversible conversion of 2-phosphoglycerate (2-PG) into phosphoenolpyruvate (PEP). It is essential for the degradation of carbohydrates via glycolysis. The protein is Enolase of Geobacillus sp. (strain WCH70).